Reading from the N-terminus, the 396-residue chain is Elongation factor Tu 2 (396 aa).

In terms of domain architecture, tr-type G spans 10–206; sequence KPHVNVGTIG…ALDSYIPLPE (197 aa). The interval 19-26 is G1; it reads GHVDHGKT. 19 to 26 serves as a coordination point for GTP; that stretch reads GHVDHGKT. Residue T26 coordinates Mg(2+). Residues 60-64 form a G2 region; that stretch reads GITIN. The interval 81–84 is G3; that stretch reads DCPG. GTP-binding positions include 81 to 85 and 136 to 139; these read DCPGH and NKCD. The interval 136 to 139 is G4; it reads NKCD. The G5 stretch occupies residues 174–176; sequence SAK.

The protein belongs to the TRAFAC class translation factor GTPase superfamily. Classic translation factor GTPase family. EF-Tu/EF-1A subfamily. As to quaternary structure, monomer.

The protein localises to the cytoplasm. The enzyme catalyses GTP + H2O = GDP + phosphate + H(+). Functionally, GTP hydrolase that promotes the GTP-dependent binding of aminoacyl-tRNA to the A-site of ribosomes during protein biosynthesis. This chain is Elongation factor Tu 2, found in Albidiferax ferrireducens (strain ATCC BAA-621 / DSM 15236 / T118) (Rhodoferax ferrireducens).